We begin with the raw amino-acid sequence, 96 residues long: Teretoxin Tgu6.1 (96 aa).

The first 16 residues, 1-16, serve as a signal peptide directing secretion; that stretch reads MRPFLVFVLIVSVSLA. The propeptide occupies 17-52; it reads FSFEDMPNKGGDSVASITADQARGHKRNPLFPFAQR.

In terms of processing, contains 3 disulfide bonds. Expressed by the venom duct.

Its subcellular location is the secreted. Functionally, the recombinant protein causes paralysis to polychaete worms (Nereis virens), the natural prey of terebrid snails. The protein is Teretoxin Tgu6.1 of Terebra guttata (White spotted auger snail).